A 338-amino-acid polypeptide reads, in one-letter code: Decarboxylase macB (338 aa).

4 residues coordinate Zn(2+): His7, His9, His159, and Asp283.

Belongs to the metallo-dependent hydrolases superfamily. ACMSD family.

The enzyme catalyses 6-methylsalicylate + H(+) = 3-methylphenol + CO2. Its pathway is secondary metabolite biosynthesis; terpenoid biosynthesis. Its function is as follows. Decarboxylase; part of the gene cluster that mediates the biosynthesis of macrophorins, isoprenoid epoxycyclohexenones containing cyclized drimane moieties. The first step of the pathway is the synthesis of 6-methylsalicylic acid (6-MSA) by the polyketide synthase macA. 6-MSA is then converted to m-cresol by the decarboxylase macB. The cytochrome P450 monooxygenase macC then catalyzes the oxidation of m-cresol to toluquinol. Epoxidation of toluquinol is then performed by the short chain dehydrogenase macD, with the help of macE, and a further prenylation by macG leads to 7-deacetoxyyanuthone A. The next step is the hydroxylation of C-22 of 7-deacetoxyyanuthone A by the cytochrome P450 monooxygenase macH to yield 22-deacetylyanuthone A. O-Mevalon transferase macI then attaches mevalon to the hydroxyl group of 22-deacetylyanuthone A to produce yanuthone E. The terpene cyclase macJ catalyzes the cyclization of 22-deacetylyanuthone A to macrophorin A. MacJ is also able to catalyze cyclization of yanuthone E and 7-deacetoxyyanuthone A to their corresponding macrophorins. The macJ products can be further modified by macH and macJ, as well as by the FAD-dependent monooxygenase macF, to produce additional macrophorins, including 4'-oxomacrophorin A, 4'-oxomacrophorin D and 4'-oxomacrophorin E. In Penicillium terrestre, this protein is Decarboxylase macB.